Consider the following 445-residue polypeptide: NAD-specific glutamate dehydrogenase (445 aa).

K124 is an active-site residue. Residue 235 to 241 participates in NAD(+) binding; that stretch reads GFGNVAW.

The protein belongs to the Glu/Leu/Phe/Val dehydrogenases family. Homohexamer.

It carries out the reaction L-glutamate + NAD(+) + H2O = 2-oxoglutarate + NH4(+) + NADH + H(+). This is NAD-specific glutamate dehydrogenase (gdhB) from Bacteroides fragilis (strain YCH46).